A 145-amino-acid chain; its full sequence is MDRNVYEACSNIIKEFGTHVVSADEVLAEKIDNAVPIPFKTREEIDADVEKDRNEGVFEGNIIPDIDLRVVHYYATQLCLNKYPHLINAFDETSLITLGLLIEKWVKDYLTSIQTEQGRQSKVIGKGPCEFISKHIDYRHAPGNI.

In terms of assembly, component of the UAF (upstream activation factor) complex which consists of UAF30, RRN5, RRN9, RRN10, and histones H3 and H4.

Its subcellular location is the nucleus. The protein localises to the nucleolus. Functionally, component of the UAF (upstream activation factor) complex which interacts with the upstream element of the RNA polymerase I promoter and forms a stable preinitiation complex. Together with SPT15/TBP UAF seems to stimulate basal transcription to a fully activated level. This chain is RNA polymerase I-specific transcription initiation factor RRN10 (RRN10), found in Saccharomyces cerevisiae (strain ATCC 204508 / S288c) (Baker's yeast).